Consider the following 419-residue polypeptide: MFSPGQEEPSAPNKEPVKYRELVVLGYNGALPNGDRGRRKSRFALYKRTYASGVKPSTIHMVSTPQASKAISSRGHHSISYTLSRSQTVVVEYTHDKDTDMFQVGRSTESPIDFVVTDTVSGGQNEDAQITQSTISRFACRIVCDRNEPYTARIFAAGFDSSKNIFLGEKAAKWKNPDGHMDGLTTNGVLVMHPQGGFTEESQPGVWREISVCGDVYTLRETRSAQQRGKLVESETNVLQDGSLIDLCGATLLWRTADGLFHAPTQKHIEALRQEINAARPQCPVGLNTLAFPSINRKEVVEEKQPWAYLSCGHVHGYHSWGHRSDTEANERECPMCRTVGPYVPLWLGCEAGFYVDAGPPTHAFTPCGHVCSEKSAKYWSQIPLPHGTHAFHAACPFCATQLVGEQNCIKLIFQGPVD.

Positions 15–202 constitute an FHA; atypical domain; it reads EPVKYRELVV…HPQGGFTEES (188 aa).

Belongs to the pellino family. Interacts with TRAF6, IRAK4 and MAP3K7. Interacts with IRAK1. Interacts with BCL10; this interaction is impaired by SOCS3. Post-translationally, phosphorylated by IRAK1 and IRAK4 enhancing its E3 ligase activity. Widely expressed both in embryos and adult. Weakly or not expressed in spleen and thymus.

It carries out the reaction S-ubiquitinyl-[E2 ubiquitin-conjugating enzyme]-L-cysteine + [acceptor protein]-L-lysine = [E2 ubiquitin-conjugating enzyme]-L-cysteine + N(6)-ubiquitinyl-[acceptor protein]-L-lysine.. Its pathway is protein modification; protein ubiquitination. E3 ubiquitin ligase catalyzing the covalent attachment of ubiquitin moieties onto substrate proteins. Involved in the TLR and IL-1 signaling pathways via interaction with the complex containing IRAK kinases and TRAF6. Mediates IL1B-induced IRAK1 'Lys-63'-linked polyubiquitination and possibly 'Lys-48'-linked ubiquitination. May be important for LPS- and IL1B-induced MAP3K7-dependent, but not MAP3K3-dependent, NF-kappa-B activation. Can activate the MAP (mitogen activated protein) kinase pathway leading to activation of ELK1. In Mus musculus (Mouse), this protein is E3 ubiquitin-protein ligase pellino homolog 2 (Peli2).